A 301-amino-acid polypeptide reads, in one-letter code: Glycine--tRNA ligase alpha subunit (301 aa).

Belongs to the class-II aminoacyl-tRNA synthetase family. In terms of assembly, tetramer of two alpha and two beta subunits.

Its subcellular location is the cytoplasm. It carries out the reaction tRNA(Gly) + glycine + ATP = glycyl-tRNA(Gly) + AMP + diphosphate. The chain is Glycine--tRNA ligase alpha subunit from Variovorax paradoxus (strain S110).